Here is a 126-residue protein sequence, read N- to C-terminus: Arginine decarboxylase proenzyme (126 aa).

The Schiff-base intermediate with substrate; via pyruvic acid role is filled by serine 74. At serine 74 the chain carries Pyruvic acid (Ser); by autocatalysis. Histidine 79 functions as the Proton acceptor; for processing activity in the catalytic mechanism. Residue cysteine 94 is the Proton donor; for catalytic activity of the active site.

The protein belongs to the prokaryotic AdoMetDC family. Type 1 subfamily. In terms of assembly, heterooctamer of four alpha and four beta chains arranged as a tetramer of alpha/beta heterodimers. Pyruvate serves as cofactor. Is synthesized initially as an inactive proenzyme. Formation of the active enzyme involves a self-maturation process in which the active site pyruvoyl group is generated from an internal serine residue via an autocatalytic post-translational modification. Two non-identical subunits are generated from the proenzyme in this reaction, and the pyruvate is formed at the N-terminus of the alpha chain, which is derived from the carboxyl end of the proenzyme. The post-translation cleavage follows an unusual pathway, termed non-hydrolytic serinolysis, in which the side chain hydroxyl group of the serine supplies its oxygen atom to form the C-terminus of the beta chain, while the remainder of the serine residue undergoes an oxidative deamination to produce ammonia and the pyruvoyl group blocking the N-terminus of the alpha chain.

The catalysed reaction is L-arginine + H(+) = agmatine + CO2. The protein operates within amine and polyamine biosynthesis; agmatine biosynthesis; agmatine from L-arginine: step 1/1. In terms of biological role, specifically catalyzes the decarboxylation of L-arginine to agmatine. Has no S-adenosylmethionine decarboxylase (AdoMetDC) activity. The chain is Arginine decarboxylase proenzyme from Pyrobaculum islandicum (strain DSM 4184 / JCM 9189 / GEO3).